We begin with the raw amino-acid sequence, 433 residues long: Probable beta-1,3-galactosyl-O-glycosyl-glycoprotein beta-1,6-N-acetylglucosaminyltransferase 7 (433 aa).

Residues 1–8 are Cytoplasmic-facing; sequence MSQLRTTK. A helical; Signal-anchor for type II membrane protein membrane pass occupies residues 9–25; it reads AGLVACGMICAFIFLYL. Over 26–433 the chain is Extracellular; that stretch reads RNPGPEEAEA…QSHFNSQPHH (408 aa). 4 disulfides stabilise this stretch: C57–C209, C143–C358, C164–C191, and C367–C398. An N-linked (GlcNAc...) asparagine glycan is attached at N112. Residues 233–275 are disordered; that stretch reads NITPGVTPPANSKPKTGQGPPKPSPDENSYTAPNTIFKQSPPH. Over residues 258–275 the composition is skewed to polar residues; the sequence is DENSYTAPNTIFKQSPPH. A disordered region spans residues 413-433; the sequence is VPPEPHWQFPQQSHFNSQPHH. The span at 421 to 433 shows a compositional bias: polar residues; that stretch reads FPQQSHFNSQPHH.

The protein belongs to the glycosyltransferase 14 family.

Its subcellular location is the golgi apparatus membrane. Its pathway is protein modification; protein glycosylation. In terms of biological role, probable glycosyltransferase. This Mus musculus (Mouse) protein is Probable beta-1,3-galactosyl-O-glycosyl-glycoprotein beta-1,6-N-acetylglucosaminyltransferase 7.